Consider the following 568-residue polypeptide: MEAPVELGPGGRQASPERRHWLRCLVLSDFREELRALLVLACPAFLAQLMVFLISFVSSVFCGHLSKLELNAVTLAIAVINVMGVSVGFGLSSACDTLISQTYGSRNLKHVGVILQRGSLILLLCCLPCWALFLNTQHILLLFRQDPAVSRLTQTYVTIFIPALPATFLYTLQVKYLLNQGIVLPQVVTGVAANLVNALANYLFVYQLHLGVMGSALANTVAQFTLALLLFLYILRSKVYQATWGGWSLECLQDWASFFRLAIPSMLMLCMEWWAYEIGSFLSGILGMVELGAQSVTYELAVIVYMIPMGLSVAVNVRVGNALGAGNIEQAKKSSAVALLVTELIAVVFCVMLLSCKDLVGYIFTSDRDIIALVAQVTPIYAVSHLFESLAGTSGGILRGSGNQKFGAIVNAIGYYVVGLPIGIALMFAAKLGVIGLWLGIVVCAVSQAVCFLGFIARLNWTKACQQARVHANLTVNTASNGNSAVLPDQPHPVGPDSHGGIVLRDADRKEGAELNEQVHPELPLPVRPEDSAHLSGKQLALRRGLLLLGVILVLLAGILVKVYVRTQ.

Met1 is modified (N-acetylmethionine). Topologically, residues 1-36 are cytoplasmic; it reads MEAPVELGPGGRQASPERRHWLRCLVLSDFREELRA. The chain crosses the membrane as a helical span at residues 37–57; it reads LLVLACPAFLAQLMVFLISFV. At 58-71 the chain is on the extracellular side; the sequence is SSVFCGHLSKLELN. A helical membrane pass occupies residues 72–92; sequence AVTLAIAVINVMGVSVGFGLS. The Cytoplasmic segment spans residues 93 to 119; it reads SACDTLISQTYGSRNLKHVGVILQRGS. The helical transmembrane segment at 120 to 140 threads the bilayer; it reads LILLLCCLPCWALFLNTQHIL. Over 141–151 the chain is Extracellular; sequence LLFRQDPAVSR. The helical transmembrane segment at 152–172 threads the bilayer; the sequence is LTQTYVTIFIPALPATFLYTL. Residues 173–175 are Cytoplasmic-facing; it reads QVK. The helical transmembrane segment at 176–196 threads the bilayer; sequence YLLNQGIVLPQVVTGVAANLV. Over 197 to 214 the chain is Extracellular; the sequence is NALANYLFVYQLHLGVMG. Residues 215–235 form a helical membrane-spanning segment; it reads SALANTVAQFTLALLLFLYIL. At 236–255 the chain is on the cytoplasmic side; sequence RSKVYQATWGGWSLECLQDW. A helical transmembrane segment spans residues 256-278; sequence ASFFRLAIPSMLMLCMEWWAYEI. The Extracellular portion of the chain corresponds to 279–294; that stretch reads GSFLSGILGMVELGAQ. A helical membrane pass occupies residues 295 to 315; that stretch reads SVTYELAVIVYMIPMGLSVAV. Over 316–335 the chain is Cytoplasmic; the sequence is NVRVGNALGAGNIEQAKKSS. Residues 336 to 356 traverse the membrane as a helical segment; that stretch reads AVALLVTELIAVVFCVMLLSC. The Extracellular segment spans residues 357-369; the sequence is KDLVGYIFTSDRD. Residues 370-390 traverse the membrane as a helical segment; sequence IIALVAQVTPIYAVSHLFESL. Residues 391–407 are Cytoplasmic-facing; the sequence is AGTSGGILRGSGNQKFG. A helical membrane pass occupies residues 408–430; the sequence is AIVNAIGYYVVGLPIGIALMFAA. The Extracellular segment spans residues 431–433; it reads KLG. Residues 434 to 456 form a helical membrane-spanning segment; it reads VIGLWLGIVVCAVSQAVCFLGFI. The Cytoplasmic portion of the chain corresponds to 457–544; sequence ARLNWTKACQ…LSGKQLALRR (88 aa). A helical transmembrane segment spans residues 545–565; sequence GLLLLGVILVLLAGILVKVYV. Residues 566-568 lie on the Extracellular side of the membrane; that stretch reads RTQ.

The protein belongs to the multi antimicrobial extrusion (MATE) (TC 2.A.66.1) family. As to expression, predominantly expressed in kidney and liver.

It localises to the cell membrane. Its subcellular location is the apical cell membrane. The catalysed reaction is thiamine(out) + H(+)(in) = thiamine(in) + H(+)(out). The enzyme catalyses estrone 3-sulfate(in) + H(+)(out) = estrone 3-sulfate(out) + H(+)(in). It catalyses the reaction creatinine(in) + H(+)(out) = creatinine(out) + H(+)(in). It carries out the reaction agmatine(in) + H(+)(out) = agmatine(out) + H(+)(in). Functionally, multidrug efflux pump that functions as a H(+)/organic cation antiporter. Plays a physiological role in the excretion of cationic compounds including endogenous metabolites, drugs, toxins through the kidney and liver, into urine and bile respectively. Mediates the efflux of endogenous compounds such as creatinine, vitamin B1/thiamine, agmatine and estrone-3-sulfate. May also contribute to regulate the transport of cationic compounds in testis across the blood-testis-barrier. The polypeptide is Multidrug and toxin extrusion protein 1 (SLC47A1) (Oryctolagus cuniculus (Rabbit)).